A 154-amino-acid chain; its full sequence is UPF0178 protein SSP2038 (154 aa).

This sequence belongs to the UPF0178 family.

The protein is UPF0178 protein SSP2038 of Staphylococcus saprophyticus subsp. saprophyticus (strain ATCC 15305 / DSM 20229 / NCIMB 8711 / NCTC 7292 / S-41).